A 423-amino-acid chain; its full sequence is Zinc finger protein Gfi-1 (423 aa).

Positions 1–20 (MPRSFLVKSKKAHSYHQPRS) are SNAG domain. A disordered region spans residues 1–102 (MPRSFLVKSK…PPSPSVSPAS (102 aa)). 2 positions are modified to phosphoserine: Ser20 and Ser57. The segment covering 48–57 (SKMEPRERLS) has biased composition (basic and acidic residues). The segment at 141–258 (RQCSALERSA…LLLGGGSYKC (118 aa)) is required for interaction with RELA. 6 consecutive C2H2-type zinc fingers follow at residues 256 to 279 (YKCI…RRSH), 285 to 307 (FACE…KAVH), 313 to 335 (FDCK…LLIH), 341 to 363 (YPCQ…TFIH), 369 to 391 (HKCQ…SRKH), and 397 to 420 (FGCD…ETQH).

In terms of assembly, interacts with U2AF1L4. Component of RCOR-GFI-KDM1A-HDAC complexes. Interacts directly with RCOR1, KDM1A and HDAC2. Also interacts with HDAC1. regions. Interacts (via the zinc-finger domain) with ARIH2; the interaction prevents GFI1 ubiquitination and proteasomal degradation. Interacts with PIAS3; the interaction relieves the inhibitory effect of PIAS3 on STAT3-mediated transcriptional activity. Forms a complex with EHMT2 and HDAC1 to promote 'Lys-9' dimethylation of H3 (H3K9Me2) and repress expression of target genes. Interacts directly with EHMT2. Component of the GFI1-AJUBA-HDAC1 repressor complex. Interacts directly with AJUBA (via ITS LIM domains); the interaction results in the HDAC-dependent corepression of a subset of GFI1 target genes and, occurs independent of the SNAG domain. Interacts with SPI1; the interaction inhibits SPI1 transcriptional activity targeted at macrophage-specific genes, repressing macrophage differentiation of myeloid progenitor cells and promoting granulocyte commitment. Interacts with RUNX1T1; the interaction represses HDAC-mediated transcriptional activity. Interacts with RELA; the interaction occurs on liposaccharide (LPS) stimulation controls RELA DNA binding activity and regulates endotoxin-mediated TOLL-like receptor inflammatory response. Interacts (via the C-terminal zinc fingers) with ZBTB17; the interaction results in the recruitment of GFI1 to the CDKN1A/p21 promoter and repression of CDKN1A/p21 transcription. Post-translationally, ubiquitinated. As to expression, restricted to lymphoid tissues and testes in adult animals.

It is found in the nucleus. Transcription repressor essential for hematopoiesis. Functions in a cell-context and development-specific manner. Binds to 5'-TAAATCAC[AT]GCA-3' in the promoter region of a large number of genes. Component of several complexes, including the EHMT2-GFI1-HDAC1, AJUBA-GFI1-HDAC1 and RCOR-GFI-KDM1A-HDAC complexes, that suppress, via histone deacetylase (HDAC) recruitment, a number of genes implicated in multilineage blood cell development. Regulates neutrophil differentiation, promotes proliferation of lymphoid cells, and is required for granulocyte development. Inhibits SPI1 transcriptional activity at macrophage-specific genes, repressing macrophage differentiation of myeloid progenitor cells and promoting granulocyte commitment. Mediates, together with U2AF1L4, the alternative splicing of CD45 and controls T-cell receptor signaling. Regulates the endotoxin-mediated Toll-like receptor (TLR) inflammatory response by antagonizing RELA. Cooperates with CBFA2T2 to regulate ITGB1-dependent neurite growth. Controls cell-cycle progression by repressing CDKNIA/p21 transcription in response to TGFB1 via recruitment of GFI1 by ZBTB17 to the CDKNIA/p21 and CDKNIB promoters. Required for the maintenance of inner ear hair cells. In addition to its role in transcription, acts as a substrate adapter for PRMT1 in the DNA damage response: facilitates the recognition of TP53BP1 and MRE11 substrates by PRMT1, promoting their methylation and the DNA damage response. This is Zinc finger protein Gfi-1 (Gfi1) from Rattus norvegicus (Rat).